The chain runs to 185 residues: Ribosome-recycling factor (185 aa).

It belongs to the RRF family.

It localises to the cytoplasm. In terms of biological role, responsible for the release of ribosomes from messenger RNA at the termination of protein biosynthesis. May increase the efficiency of translation by recycling ribosomes from one round of translation to another. Plays a role in sporulation. This chain is Ribosome-recycling factor, found in Bacillus subtilis (strain 168).